The chain runs to 845 residues: MSKSFQQSSLGRDSQGHGRDLSAAGIGLLAAATQSLSMPASLGRMNQGTARLASLMNLGMSSSLNQQGAHSALSSASTSSHNLQSIFNIGSRGPLPLSSQHRGDTDQASNILASFGLSARDLDELSRYPEDKITPENLPQILLQLKRRRTEEGPTLSYGRDGRSATREPPYRVPRDDWEEKRHFRRDSFDDRGPSLNPVLDYDHGSRSQESGYYDRMDYEDDRLRDGERCRDDSFFGETSHNYHKFDSEYERMGRGPGPLQERSLFEKKRGAPPSSNIEDFHGLLPKGYPHLCSICDLPVHSNKEWSQHINGASHSRRCQLLLEIYPEWNPDNDTGHTMGDPFMLQQSTNPAPGILGPPPPSFHLGGPAVGPRGNLGAGNGNLQGPRHMQKGRVETSRVVHIMDFQRGKNLRYQLLQLVEPFGVISNHLILNKINEAFIEMATTEDAQAAVDYYTTTPALVFGKPVRVHLSQKYKRIKKPEGKPDEKFDQKQELGRVIHLSNLPHSGYSDSAVLKLAEPYGKIKNYILMRMKSQAFIEMETREDAMAMVDHCLKKALWFQGRCVKVDLSEKYKKLVLRIPNRGIDLLKKDKSRKRSYSPDGKESPSDKKSKTDGAQKTENPAEGKEQEEKSGEDGEKDTKDDQTEQEPSMLLESEDELLVDEEEAAALIESGSSVGDETDLANLGDVSSDGKKEPSDKAVKKDASATSKKKLKKVDKIEELDQENEAALENGIKNEENTEPGAESAENADDPNKDASDNSDGQNDENKEDYTIPDEYRIGPYQPNVPGGIDYVIPKTGFYCKLCSLFYTNEEVAKNTHCSSLPHYQKLKKFLNKLAEERRQKKES.

Residue Ser-2 is modified to N-acetylserine. Lys-3 is subject to N6-acetyllysine; alternate. Lys-3 is covalently cross-linked (Glycyl lysine isopeptide (Lys-Gly) (interchain with G-Cter in SUMO2); alternate). Residues Ser-4, Ser-9, Ser-14, Ser-22, Ser-41, Ser-118, and Ser-126 each carry the phosphoserine modification. Glycyl lysine isopeptide (Lys-Gly) (interchain with G-Cter in SUMO2) cross-links involve residues Lys-132 and Lys-146. Disordered stretches follow at residues 147–174 and 187–213; these read RRRT…YRVP and DSFD…ESGY. Residue Thr-150 is modified to Phosphothreonine. Residue Ser-157 is modified to Phosphoserine. At Tyr-158 the chain carries Phosphotyrosine. Residues 160-174 show a composition bias toward basic and acidic residues; it reads RDGRSATREPPYRVP. Residues Ser-164, Ser-188, and Ser-195 each carry the phosphoserine modification. Positions 201–213 are enriched in basic and acidic residues; it reads DYDHGSRSQESGY. Position 202 is a phosphotyrosine (Tyr-202). Residues Ser-206, Ser-208, and Ser-211 each carry the phosphoserine modification. Tyr-219 carries the post-translational modification Phosphotyrosine. At Ser-234 the chain carries Phosphoserine. Lys-245 is covalently cross-linked (Glycyl lysine isopeptide (Lys-Gly) (interchain with G-Cter in SUMO2)). Ser-264 carries the post-translational modification Phosphoserine. Lys-269 is covalently cross-linked (Glycyl lysine isopeptide (Lys-Gly) (interchain with G-Cter in SUMO2)). Ser-275 carries the post-translational modification Phosphoserine. The segment at 342–394 is disordered; that stretch reads PFMLQQSTNPAPGILGPPPPSFHLGGPAVGPRGNLGAGNGNLQGPRHMQKGRV. The RRM 1 domain maps to 398-473; the sequence is RVVHIMDFQR…KPVRVHLSQK (76 aa). Glycyl lysine isopeptide (Lys-Gly) (interchain with G-Cter in SUMO2) cross-links involve residues Lys-478, Lys-487, and Lys-491. Residues 496–571 form the RRM 2 domain; that stretch reads RVIHLSNLPH…RCVKVDLSEK (76 aa). Phosphoserine is present on residues Ser-509 and Ser-511. Residue Lys-515 forms a Glycyl lysine isopeptide (Lys-Gly) (interchain with G-Cter in SUMO2) linkage. Residue Lys-522 is modified to N6-acetyllysine; alternate. Lys-522 participates in a covalent cross-link: Glycyl lysine isopeptide (Lys-Gly) (interchain with G-Cter in SUMO2); alternate. Ser-533 carries the post-translational modification Phosphoserine. Glycyl lysine isopeptide (Lys-Gly) (interchain with G-Cter in SUMO2) cross-links involve residues Lys-554 and Lys-555. Position 571 is an N6-acetyllysine (Lys-571). Positions 588 to 785 are disordered; it reads KKDKSRKRSY…EYRIGPYQPN (198 aa). Residues Ser-596, Ser-598, Ser-604, and Ser-606 each carry the phosphoserine modification. Positions 600–643 are enriched in basic and acidic residues; the sequence is DGKESPSDKKSKTDGAQKTENPAEGKEQEEKSGEDGEKDTKDDQ. Residues Lys-617 and Lys-630 each participate in a glycyl lysine isopeptide (Lys-Gly) (interchain with G-Cter in SUMO2) cross-link. A compositionally biased stretch (acidic residues) spans 653-665; the sequence is ESEDELLVDEEEA. Residues Ser-654, Ser-671, Ser-673, and Ser-674 each carry the phosphoserine modification. Phosphothreonine is present on Thr-679. Position 689 is a phosphoserine (Ser-689). Positions 689–704 are enriched in basic and acidic residues; it reads SDGKKEPSDKAVKKDA. A Nuclear localization signal motif is present at residues 708–716; that stretch reads SKKKLKKVD. Residues Lys-717 and Lys-734 each participate in a glycyl lysine isopeptide (Lys-Gly) (interchain with G-Cter in SUMO2) cross-link. Thr-739 is modified (phosphothreonine). Residues Ser-745, Ser-757, and Ser-760 each carry the phosphoserine modification. Over residues 765–778 the composition is skewed to basic and acidic residues; the sequence is DENKEDYTIPDEYR. Lys-768 participates in a covalent cross-link: Glycyl lysine isopeptide (Lys-Gly) (interchain with G-Cter in SUMO2). Residues 799–830 form a Matrin-type zinc finger; it reads FYCKLCSLFYTNEEVAKNTHCSSLPHYQKLKK. Lys-834 is modified (N6-acetyllysine; alternate). Lys-834 is covalently cross-linked (Glycyl lysine isopeptide (Lys-Gly) (interchain with G-Cter in SUMO2); alternate).

Part of a complex consisting of SFPQ, NONO and MATR3. Interacts with AGO1 and AGO2. Part of a complex composed at least of ASH2L, EMSY, HCFC1, HSPA8, CCAR2, MATR3, MKI67, RBBP5, TUBB2A, WDR5 and ZNF335; this complex may have a histone H3-specific methyltransferase activity. Interacts with TARDBP. Part of the HDP-RNP complex composed of at least HEXIM1, PRKDC, XRCC5, XRCC6, paraspeckle proteins (SFPQ, NONO, PSPC1, RBM14, and MATR3) and NEAT1 RNA. Interacts with FUS. Interacts with IGF2BP1. Interacts with IGF2BP2 and IGF2BP3. Interacts with RBPMS.

It localises to the nucleus matrix. May play a role in transcription or may interact with other nuclear matrix proteins to form the internal fibrogranular network. In association with the SFPQ-NONO heteromer may play a role in nuclear retention of defective RNAs. Plays a role in the regulation of DNA virus-mediated innate immune response by assembling into the HDP-RNP complex, a complex that serves as a platform for IRF3 phosphorylation and subsequent innate immune response activation through the cGAS-STING pathway. Binds to N6-methyladenosine (m6A)-containing mRNAs and contributes to MYC stability by binding to m6A-containing MYC mRNAs. May bind to specific miRNA hairpins. The polypeptide is Matrin-3 (Matr3) (Rattus norvegicus (Rat)).